The following is a 587-amino-acid chain: Succinate dehydrogenase flavoprotein subunit (587 aa).

Residues 15 to 20 (GAGGAG), 39 to 54 (SKVF…AQGG), and D223 each bind FAD. At H47 the chain carries Tele-8alpha-FAD histidine. 2 residues coordinate substrate: H244 and T256. R288 (proton acceptor) is an active-site residue. H355 contacts substrate. FAD is bound at residue E389. Residue R400 coordinates substrate. FAD is bound at residue 405 to 406 (SL).

The protein belongs to the FAD-dependent oxidoreductase 2 family. FRD/SDH subfamily. In terms of assembly, part of an enzyme complex containing four subunits: a flavoprotein, an iron-sulfur protein, cytochrome b-556 and a hydrophobic protein. Requires FAD as cofactor.

It localises to the cell inner membrane. The enzyme catalyses a quinone + succinate = fumarate + a quinol. The protein operates within carbohydrate metabolism; tricarboxylic acid cycle; fumarate from succinate (bacterial route): step 1/1. In Coxiella burnetii (strain RSA 493 / Nine Mile phase I), this protein is Succinate dehydrogenase flavoprotein subunit (sdhA).